A 212-amino-acid chain; its full sequence is Thymidylate kinase (212 aa).

An ATP-binding site is contributed by 10 to 17; it reads GGEGSGKT.

Belongs to the thymidylate kinase family.

It carries out the reaction dTMP + ATP = dTDP + ADP. Functionally, phosphorylation of dTMP to form dTDP in both de novo and salvage pathways of dTTP synthesis. This chain is Thymidylate kinase, found in Marinomonas sp. (strain MWYL1).